The primary structure comprises 397 residues: S-adenosylmethionine synthase (397 aa).

His15 contacts ATP. Asp17 contacts Mg(2+). Glu43 serves as a coordination point for K(+). Residues Glu56 and Gln99 each contribute to the L-methionine site. The tract at residues 99–109 is flexible loop; the sequence is QSGDIAMGVDE. Residues 175–177, 241–242, Asp250, 256–257, Ala273, and Lys277 contribute to the ATP site; these read DGK, RF, and RK. Asp250 lines the L-methionine pocket. Residue Lys281 coordinates L-methionine.

This sequence belongs to the AdoMet synthase family. Homotetramer; dimer of dimers. The cofactor is Mg(2+). K(+) is required as a cofactor.

It localises to the cytoplasm. It catalyses the reaction L-methionine + ATP + H2O = S-adenosyl-L-methionine + phosphate + diphosphate. It functions in the pathway amino-acid biosynthesis; S-adenosyl-L-methionine biosynthesis; S-adenosyl-L-methionine from L-methionine: step 1/1. In terms of biological role, catalyzes the formation of S-adenosylmethionine (AdoMet) from methionine and ATP. The overall synthetic reaction is composed of two sequential steps, AdoMet formation and the subsequent tripolyphosphate hydrolysis which occurs prior to release of AdoMet from the enzyme. This Clostridioides difficile (strain 630) (Peptoclostridium difficile) protein is S-adenosylmethionine synthase.